The following is a 169-amino-acid chain: Der GTPase-activating protein YihI (169 aa).

Disordered regions lie at residues 1–92 (MKPS…EKPM) and 146–169 (SYDD…LRGN). A compositionally biased stretch (basic residues) spans 10 to 19 (SKGHAKARRK). The span at 20-30 (TREELDQEARD) shows a compositional bias: basic and acidic residues. A compositionally biased stretch (basic residues) spans 31-40 (RKRQKKRRGH). Over residues 49-58 (GNTTSGSKGQ) the composition is skewed to polar residues. Residues 147 to 159 (YDDDEEEEEDEKQ) show a composition bias toward acidic residues. Residues 160–169 (EDMMRLLRGN) show a composition bias toward basic and acidic residues.

This sequence belongs to the YihI family. As to quaternary structure, interacts with Der.

In terms of biological role, a GTPase-activating protein (GAP) that modifies Der/EngA GTPase function. May play a role in ribosome biogenesis. The polypeptide is Der GTPase-activating protein YihI (Escherichia coli O1:K1 / APEC).